A 345-amino-acid polypeptide reads, in one-letter code: L-rhamnose-proton symporter (345 aa).

Transmembrane regions (helical) follow at residues 4–24, 38–58, 68–88, 101–121, 131–151, 175–195, 214–234, 259–279, 290–310, and 323–343; these read AITM…CFYA, WSVG…ALLL, FSAA…IGNI, MGIG…TPLL, TAGG…VAIV, LVLA…MDAA, LPSY…FCFI, VLLS…YAWG, ISWM…GLLL, and VLSL…LGMA.

This sequence belongs to the L-rhamnose transporter (TC 2.A.7.6) family.

Its subcellular location is the cell inner membrane. It catalyses the reaction L-rhamnopyranose(in) + H(+)(in) = L-rhamnopyranose(out) + H(+)(out). Functionally, uptake of L-rhamnose across the cytoplasmic membrane with the concomitant transport of protons into the cell (symport system). The sequence is that of L-rhamnose-proton symporter from Cronobacter sakazakii (strain ATCC BAA-894) (Enterobacter sakazakii).